We begin with the raw amino-acid sequence, 120 residues long: NAD(P)H-quinone oxidoreductase subunit 3, chloroplastic (120 aa).

The next 3 membrane-spanning stretches (helical) occupy residues 9–29, 64–84, and 88–108; these read IFWAFLIISSAIPVLAFLISG, MFALVFVVFDVETVFLYPWAM, and VLGVSAFIEAFIFVLILILGL.

The protein belongs to the complex I subunit 3 family. As to quaternary structure, NDH is composed of at least 16 different subunits, 5 of which are encoded in the nucleus.

The protein resides in the plastid. It is found in the chloroplast thylakoid membrane. The enzyme catalyses a plastoquinone + NADH + (n+1) H(+)(in) = a plastoquinol + NAD(+) + n H(+)(out). The catalysed reaction is a plastoquinone + NADPH + (n+1) H(+)(in) = a plastoquinol + NADP(+) + n H(+)(out). In terms of biological role, NDH shuttles electrons from NAD(P)H:plastoquinone, via FMN and iron-sulfur (Fe-S) centers, to quinones in the photosynthetic chain and possibly in a chloroplast respiratory chain. The immediate electron acceptor for the enzyme in this species is believed to be plastoquinone. Couples the redox reaction to proton translocation, and thus conserves the redox energy in a proton gradient. This chain is NAD(P)H-quinone oxidoreductase subunit 3, chloroplastic, found in Capsella bursa-pastoris (Shepherd's purse).